The following is a 65-amino-acid chain: Metallothionein-B (65 aa).

The protein belongs to the metallothionein superfamily. Type 4 family.

Its function is as follows. Metallothioneins have a high content of cysteine residues that bind various heavy metals. The protein is Metallothionein-B (MTB1) of Strongylocentrotus purpuratus (Purple sea urchin).